Consider the following 232-residue polypeptide: MTVQQRRRPPIASRETLQALLSEGAQALGVALSDAQRSALLDYVALLAKWNAVYNLTAIRDPRQMLIQHILDSLSIVPHLGAHGAAAAALDVGSGGGLPGVVLAIALPGWRVTLNDIVHKKSAFQNQAKAELKLGNLSVVTGRVETLRPGADVPAKFDVIVSRAFADLADFVTLARHLVAPGGSIWAMKGVRPDEEIGRLPDGARVKQMIRLTVPSLDAERHLIEVELDEAI.

S-adenosyl-L-methionine-binding positions include G93, L98, 144–145 (VE), and R163.

It belongs to the methyltransferase superfamily. RNA methyltransferase RsmG family.

It is found in the cytoplasm. It catalyses the reaction guanosine(527) in 16S rRNA + S-adenosyl-L-methionine = N(7)-methylguanosine(527) in 16S rRNA + S-adenosyl-L-homocysteine. Specifically methylates the N7 position of guanine in position 527 of 16S rRNA. This Burkholderia pseudomallei (strain 1106a) protein is Ribosomal RNA small subunit methyltransferase G.